Here is a 366-residue protein sequence, read N- to C-terminus: ATPase ASNA1 homolog (366 aa).

Residue 33–40 (KGGVGKTT) coordinates ATP. Asp-62 is a catalytic residue. 2 residues coordinate ATP: Glu-234 and Asn-261.

Belongs to the arsA ATPase family. Homodimer.

It is found in the cytoplasm. It localises to the endoplasmic reticulum. Functionally, ATPase required for the post-translational delivery of tail-anchored (TA) proteins to the endoplasmic reticulum. Recognizes and selectively binds the transmembrane domain of TA proteins in the cytosol. This complex then targets to the endoplasmic reticulum by membrane-bound receptors, where the tail-anchored protein is released for insertion. This process is regulated by ATP binding and hydrolysis. ATP binding drives the homodimer towards the closed dimer state, facilitating recognition of newly synthesized TA membrane proteins. ATP hydrolysis is required for insertion. Subsequently, the homodimer reverts towards the open dimer state, lowering its affinity for the membrane-bound receptor, and returning it to the cytosol to initiate a new round of targeting. In Cryptosporidium parvum (strain Iowa II), this protein is ATPase ASNA1 homolog.